The following is a 289-amino-acid chain: Agroclavine dehydrogenase (289 aa).

Belongs to the fgaFS/easG family. As to quaternary structure, monomer.

It catalyses the reaction agroclavine + NADP(+) = didehydroagroclavine + NADPH + H(+). It participates in alkaloid biosynthesis; ergot alkaloid biosynthesis. In terms of biological role, agroclavine dehydrogenase; part of the gene cluster that mediates the biosynthesis of fungal ergot alkaloid ergovaline, the predominant ergopeptine product in E.festucae var. lolii. DmaW catalyzes the first step of ergot alkaloid biosynthesis by condensing dimethylallyl diphosphate (DMAP) and tryptophan to form 4-dimethylallyl-L-tryptophan. The second step is catalyzed by the methyltransferase easF that methylates 4-dimethylallyl-L-tryptophan in the presence of S-adenosyl-L-methionine, resulting in the formation of 4-dimethylallyl-L-abrine. The catalase easC and the FAD-dependent oxidoreductase easE then transform 4-dimethylallyl-L-abrine to chanoclavine-I which is further oxidized by easD in the presence of NAD(+), resulting in the formation of chanoclavine-I aldehyde. Agroclavine dehydrogenase easG then mediates the conversion of chanoclavine-I aldehyde to agroclavine via a non-enzymatic adduct reaction: the substrate is an iminium intermediate that is formed spontaneously from chanoclavine-I aldehyde in the presence of glutathione. Further conversion of agroclavine to paspalic acid is a two-step process involving oxidation of agroclavine to elymoclavine and of elymoclavine to paspalic acid, the second step being performed by the elymoclavine oxidase cloA. However, cloA does not encode a functional enzyme indicating that C.fusiformis terminates its ergot alkaloid pathway at elymoclavine. In Claviceps fusiformis (Ergot fungus), this protein is Agroclavine dehydrogenase.